The following is a 132-amino-acid chain: Small ribosomal subunit protein uS8 (132 aa).

This sequence belongs to the universal ribosomal protein uS8 family. In terms of assembly, part of the 30S ribosomal subunit. Contacts proteins S5 and S12.

One of the primary rRNA binding proteins, it binds directly to 16S rRNA central domain where it helps coordinate assembly of the platform of the 30S subunit. In Cereibacter sphaeroides (strain ATCC 17029 / ATH 2.4.9) (Rhodobacter sphaeroides), this protein is Small ribosomal subunit protein uS8.